A 502-amino-acid polypeptide reads, in one-letter code: ATP synthase subunit alpha (502 aa).

Residues Val-115–Met-137 are disordered. Gly-169–Thr-176 contacts ATP.

This sequence belongs to the ATPase alpha/beta chains family. In terms of assembly, F-type ATPases have 2 components, CF(1) - the catalytic core - and CF(0) - the membrane proton channel. CF(1) has five subunits: alpha(3), beta(3), gamma(1), delta(1), epsilon(1). CF(0) has three main subunits: a(1), b(2) and c(9-12). The alpha and beta chains form an alternating ring which encloses part of the gamma chain. CF(1) is attached to CF(0) by a central stalk formed by the gamma and epsilon chains, while a peripheral stalk is formed by the delta and b chains.

The protein resides in the cell membrane. It carries out the reaction ATP + H2O + 4 H(+)(in) = ADP + phosphate + 5 H(+)(out). Functionally, produces ATP from ADP in the presence of a proton gradient across the membrane. The alpha chain is a regulatory subunit. This is ATP synthase subunit alpha from Geobacillus kaustophilus (strain HTA426).